The chain runs to 342 residues: GTPase Obg (342 aa).

In terms of domain architecture, Obg spans 1-159 (MQFIDQAKIE…KQLRLELKLL (159 aa)). The OBG-type G domain maps to 160–330 (AEVGIIGLPN…MLQEIWGILD (171 aa)). Residues 166–173 (GLPNAGKS), 191–195 (FTTLI), 213–216 (DIPG), 280–283 (NKID), and 311–313 (SAV) each bind GTP. The Mg(2+) site is built by serine 173 and threonine 193.

This sequence belongs to the TRAFAC class OBG-HflX-like GTPase superfamily. OBG GTPase family. As to quaternary structure, monomer. Mg(2+) serves as cofactor.

It is found in the cytoplasm. Functionally, an essential GTPase which binds GTP, GDP and possibly (p)ppGpp with moderate affinity, with high nucleotide exchange rates and a fairly low GTP hydrolysis rate. Plays a role in control of the cell cycle, stress response, ribosome biogenesis and in those bacteria that undergo differentiation, in morphogenesis control. The chain is GTPase Obg from Nostoc punctiforme (strain ATCC 29133 / PCC 73102).